We begin with the raw amino-acid sequence, 119 residues long: Protein Wnt-4 (119 aa).

The O-palmitoleoyl serine; by PORCN moiety is linked to residue Ser1. 2 cysteine pairs are disulfide-bonded: Cys69–Cys100 and Cys85–Cys95. A glycan (N-linked (GlcNAc...) asparagine) is linked at Asn86.

It belongs to the Wnt family. In terms of processing, palmitoleoylation is required for efficient binding to frizzled receptors. Depalmitoleoylation leads to Wnt signaling pathway inhibition.

Its subcellular location is the secreted. The protein resides in the extracellular space. The protein localises to the extracellular matrix. Ligand for members of the frizzled family of seven transmembrane receptors. Plays an important role in embryonic development. This Eptatretus stoutii (Pacific hagfish) protein is Protein Wnt-4 (WNT-4).